The sequence spans 336 residues: Pyridoxal 5'-phosphate synthase subunit PdxS (336 aa).

Residue Asp-30 coordinates D-ribose 5-phosphate. Catalysis depends on Lys-87, which acts as the Schiff-base intermediate with D-ribose 5-phosphate. Gly-159 serves as a coordination point for D-ribose 5-phosphate. Arg-171 serves as a coordination point for D-glyceraldehyde 3-phosphate. D-ribose 5-phosphate contacts are provided by residues Gly-257 and 278–279; that span reads GS.

Belongs to the PdxS/SNZ family. In the presence of PdxT, forms a dodecamer of heterodimers.

It carries out the reaction aldehydo-D-ribose 5-phosphate + D-glyceraldehyde 3-phosphate + L-glutamine = pyridoxal 5'-phosphate + L-glutamate + phosphate + 3 H2O + H(+). Its pathway is cofactor biosynthesis; pyridoxal 5'-phosphate biosynthesis. In terms of biological role, catalyzes the formation of pyridoxal 5'-phosphate from ribose 5-phosphate (RBP), glyceraldehyde 3-phosphate (G3P) and ammonia. The ammonia is provided by the PdxT subunit. Can also use ribulose 5-phosphate and dihydroxyacetone phosphate as substrates, resulting from enzyme-catalyzed isomerization of RBP and G3P, respectively. This chain is Pyridoxal 5'-phosphate synthase subunit PdxS, found in Thermoplasma acidophilum (strain ATCC 25905 / DSM 1728 / JCM 9062 / NBRC 15155 / AMRC-C165).